Here is a 94-residue protein sequence, read N- to C-terminus: Integration host factor subunit beta (94 aa).

It belongs to the bacterial histone-like protein family. Heterodimer of an alpha and a beta chain.

In terms of biological role, this protein is one of the two subunits of integration host factor, a specific DNA-binding protein that functions in genetic recombination as well as in transcriptional and translational control. In Dickeya dadantii (strain 3937) (Erwinia chrysanthemi (strain 3937)), this protein is Integration host factor subunit beta (ihfB).